Here is a 1969-residue protein sequence, read N- to C-terminus: Protein mono-ADP-ribosyltransferase PARP4 (1969 aa).

The BRCT domain maps to 1-94 (MTLGIFANCI…RLLDVRNYDP (94 aa)). The Nuclear localization signal signature appears at 19–25 (PRQQKKK). Residues 92-132 (YDPLSPAPAAPPAERSRSEVQSEYLPSDNTPEKENTEVTEV) are disordered. Residues 235 to 363 (SEKLQALLLE…ETNLSKPNPP (129 aa)) enclose the PARP alpha-helical domain. Residues 362-566 (PPSLAKYRAL…FCTPGDQIKE (205 aa)) form the PARP catalytic domain. The region spanning 600 to 728 (TNIKAGLQDA…KVLIKITYIT (129 aa)) is the VIT domain. Positions 869–1039 (EVIICLDCSS…KQIEAQMTRI (171 aa)) constitute a VWFA domain. The residue at position 1229 (serine 1229) is a Phosphoserine. The short motif at 1230 to 1242 (DGHGVLQPVSVSS) is the Nuclear localization signal element. Composition is skewed to pro residues over residues 1372-1387 (PPHP…PLPL), 1402-1417 (HPPP…PPPS), 1425-1444 (LPPP…PPIP), 1485-1513 (LPPP…PPPS), and 1521-1540 (LPPP…PPIP). The tract at residues 1372-1608 (PPHPLGGTHP…AGTQFSLSPI (237 aa)) is disordered. Residues 1443-1541 (IPGGTLIPPS…HIPPPPPIPG (99 aa)) form the FH1 domain. The segment covering 1541–1556 (GGTLIPSPSSLFGGTH) has biased composition (low complexity). Residues 1557–1585 (LPPPPLLPAGTHIPPPPPITGSTHPPPPS) show a composition bias toward pro residues. Residues 1808-1969 (FCDEDQESPV…LHRILYYSQG (162 aa)) are interaction with the major vault protein.

It belongs to the ARTD/PARP family. In terms of assembly, component of the vault ribonucleoprotein particle, at least composed of MVP, PARP4 and one or more vault RNAs (vRNAs). Interacts with TEP1.

It is found in the cytoplasm. The protein localises to the nucleus. It carries out the reaction L-aspartyl-[protein] + NAD(+) = 4-O-(ADP-D-ribosyl)-L-aspartyl-[protein] + nicotinamide. It catalyses the reaction L-glutamyl-[protein] + NAD(+) = 5-O-(ADP-D-ribosyl)-L-glutamyl-[protein] + nicotinamide. Mono-ADP-ribosyltransferase that mediates mono-ADP-ribosylation of target proteins. The protein is Protein mono-ADP-ribosyltransferase PARP4 of Mus musculus (Mouse).